A 339-amino-acid chain; its full sequence is MTQAQTATVQPDAIPVAAPASQRWRVADVVALFELPFNDLIFRAQQVHREHFDANAVQLSTLLSIKTGGCEEDCGYCSQSSHHDTGLKAEKLMDVDAVLDAARAAKANGASRFCMGAAWRNPKERHMPALTEMVRGVKELGLETCMTLGMLEDEQAQELANAGLDYYNHNLDTSPEFYGQVISTRTYQDRLDTLDRVRDAGINVCCGGIIGMGESRRERAGLISQLANLNPYPDSVPINNLVAIEGTPLEGTAPLDPFEFVRTIAVARITMPKAVVRLSAGREQLDDGLQAMCFLAGANSMFYGDQLLTTSNPQSQKDRALFERLGIRASDADAMQANA.

Residues 55–282 enclose the Radical SAM core domain; it reads NAVQLSTLLS…KAVVRLSAGR (228 aa). Cys70, Cys74, and Cys77 together coordinate [4Fe-4S] cluster. Residues Cys114, Cys145, Cys205, and Arg277 each coordinate [2Fe-2S] cluster.

It belongs to the radical SAM superfamily. Biotin synthase family. In terms of assembly, homodimer. The cofactor is [4Fe-4S] cluster. It depends on [2Fe-2S] cluster as a cofactor.

The enzyme catalyses (4R,5S)-dethiobiotin + (sulfur carrier)-SH + 2 reduced [2Fe-2S]-[ferredoxin] + 2 S-adenosyl-L-methionine = (sulfur carrier)-H + biotin + 2 5'-deoxyadenosine + 2 L-methionine + 2 oxidized [2Fe-2S]-[ferredoxin]. It participates in cofactor biosynthesis; biotin biosynthesis; biotin from 7,8-diaminononanoate: step 2/2. Functionally, catalyzes the conversion of dethiobiotin (DTB) to biotin by the insertion of a sulfur atom into dethiobiotin via a radical-based mechanism. The polypeptide is Biotin synthase (Burkholderia ambifaria (strain ATCC BAA-244 / DSM 16087 / CCUG 44356 / LMG 19182 / AMMD) (Burkholderia cepacia (strain AMMD))).